Here is a 572-residue protein sequence, read N- to C-terminus: 2-isopropylmalate synthase (572 aa).

The region spanning 39–313 is the Pyruvate carboxyltransferase domain; the sequence is PVWMSTDLRD…HPGLDFSRIN (275 aa). 4 residues coordinate Mg(2+): Asp48, His252, His254, and Asn288. The interval 445 to 572 is regulatory domain; sequence VAAPYAYVEH…GVGRQVAATR (128 aa).

It belongs to the alpha-IPM synthase/homocitrate synthase family. LeuA type 2 subfamily. Homodimer. It depends on Mg(2+) as a cofactor.

It is found in the cytoplasm. The enzyme catalyses 3-methyl-2-oxobutanoate + acetyl-CoA + H2O = (2S)-2-isopropylmalate + CoA + H(+). Its pathway is amino-acid biosynthesis; L-leucine biosynthesis; L-leucine from 3-methyl-2-oxobutanoate: step 1/4. Functionally, catalyzes the condensation of the acetyl group of acetyl-CoA with 3-methyl-2-oxobutanoate (2-ketoisovalerate) to form 3-carboxy-3-hydroxy-4-methylpentanoate (2-isopropylmalate). The chain is 2-isopropylmalate synthase from Azoarcus sp. (strain BH72).